We begin with the raw amino-acid sequence, 376 residues long: Chaperone protein DnaJ (376 aa).

One can recognise a J domain in the interval 5–69; it reads DYYEVLGVSK…QKRAQYDQYG (65 aa). The CR-type zinc-finger motif lies at 133–215; it reads GKDAEIEIPR…CHGKGRVTKT (83 aa). Positions 146, 149, 163, 166, 189, 192, 203, and 206 each coordinate Zn(2+). CXXCXGXG motif repeat units lie at residues 146-153, 163-170, 189-196, and 203-210; these read CDTCHGSG, CSHCGGKG, CQYCNGTG, and CPTCHGKG.

The protein belongs to the DnaJ family. Homodimer. Requires Zn(2+) as cofactor.

The protein resides in the cytoplasm. Participates actively in the response to hyperosmotic and heat shock by preventing the aggregation of stress-denatured proteins and by disaggregating proteins, also in an autonomous, DnaK-independent fashion. Unfolded proteins bind initially to DnaJ; upon interaction with the DnaJ-bound protein, DnaK hydrolyzes its bound ATP, resulting in the formation of a stable complex. GrpE releases ADP from DnaK; ATP binding to DnaK triggers the release of the substrate protein, thus completing the reaction cycle. Several rounds of ATP-dependent interactions between DnaJ, DnaK and GrpE are required for fully efficient folding. Also involved, together with DnaK and GrpE, in the DNA replication of plasmids through activation of initiation proteins. The polypeptide is Chaperone protein DnaJ (Listeria monocytogenes serotype 4b (strain CLIP80459)).